A 113-amino-acid chain; its full sequence is Large ribosomal subunit protein uL22 (113 aa).

Belongs to the universal ribosomal protein uL22 family. In terms of assembly, part of the 50S ribosomal subunit.

In terms of biological role, this protein binds specifically to 23S rRNA; its binding is stimulated by other ribosomal proteins, e.g. L4, L17, and L20. It is important during the early stages of 50S assembly. It makes multiple contacts with different domains of the 23S rRNA in the assembled 50S subunit and ribosome. The globular domain of the protein is located near the polypeptide exit tunnel on the outside of the subunit, while an extended beta-hairpin is found that lines the wall of the exit tunnel in the center of the 70S ribosome. In Bacillus mycoides (strain KBAB4) (Bacillus weihenstephanensis), this protein is Large ribosomal subunit protein uL22.